The chain runs to 490 residues: uncharacterized protein (490 aa).

Residues 370–385 (FSMKRPSSSSSSLSGS) are compositionally biased toward low complexity. The tract at residues 370 to 406 (FSMKRPSSSSSSLSGSWHGDTENSVKQSLASPSEASL) is disordered. Over residues 391 to 406 (ENSVKQSLASPSEASL) the composition is skewed to polar residues.

The protein localises to the cytoplasm. The protein resides in the nucleus. This is an uncharacterized protein from Schizosaccharomyces pombe (strain 972 / ATCC 24843) (Fission yeast).